The sequence spans 462 residues: Cell wall mannoprotein 1 (462 aa).

The first 18 residues, 1–18 (MKFLSSLVVLGLSAQALA), serve as a signal peptide directing secretion. S313 contributes to the hexadecanoate binding site. Positions 346-429 (FAGTGPAPTT…SVPAAPTGGN (84 aa)) are disordered. Residues 347–366 (AGTGPAPTTSSTPEASTAPA) show a composition bias toward low complexity. Positions 399-420 (VWPTSTTASPDVQPTITSSGTS) are enriched in polar residues.

It belongs to the cell wall mannoprotein 1 family. Monomer. Mannoprotein, glycosylated.

The protein resides in the secreted. It is found in the cell wall. In terms of biological role, constitutive protein of the cell wall. Binds fatty acids and may thus serve as a fatty acid transporter between P.marneffei and host cells during infection. Abundant antigen target of host humoral immune response. This chain is Cell wall mannoprotein 1, found in Talaromyces marneffei (Penicillium marneffei).